We begin with the raw amino-acid sequence, 217 residues long: N-(5'-phosphoribosyl)anthranilate isomerase (217 aa).

It belongs to the TrpF family.

The enzyme catalyses N-(5-phospho-beta-D-ribosyl)anthranilate = 1-(2-carboxyphenylamino)-1-deoxy-D-ribulose 5-phosphate. It functions in the pathway amino-acid biosynthesis; L-tryptophan biosynthesis; L-tryptophan from chorismate: step 3/5. This Chlorobium luteolum (strain DSM 273 / BCRC 81028 / 2530) (Pelodictyon luteolum) protein is N-(5'-phosphoribosyl)anthranilate isomerase.